The sequence spans 199 residues: Dephospho-CoA kinase (199 aa).

Residues 11 to 199 (RIGLTGGIAS…DLHDQLDALL (189 aa)) enclose the DPCK domain. 19–24 (ASGKSS) provides a ligand contact to ATP.

Belongs to the CoaE family.

The protein resides in the cytoplasm. It carries out the reaction 3'-dephospho-CoA + ATP = ADP + CoA + H(+). It functions in the pathway cofactor biosynthesis; coenzyme A biosynthesis; CoA from (R)-pantothenate: step 5/5. Its function is as follows. Catalyzes the phosphorylation of the 3'-hydroxyl group of dephosphocoenzyme A to form coenzyme A. In Synechococcus sp. (strain CC9902), this protein is Dephospho-CoA kinase.